We begin with the raw amino-acid sequence, 122 residues long: Large ribosomal subunit protein uL14 (122 aa).

This sequence belongs to the universal ribosomal protein uL14 family. As to quaternary structure, part of the 50S ribosomal subunit. Forms a cluster with proteins L3 and L19. In the 70S ribosome, L14 and L19 interact and together make contacts with the 16S rRNA in bridges B5 and B8.

Functionally, binds to 23S rRNA. Forms part of two intersubunit bridges in the 70S ribosome. The polypeptide is Large ribosomal subunit protein uL14 (Shewanella halifaxensis (strain HAW-EB4)).